Reading from the N-terminus, the 547-residue chain is Chaperonin GroEL (547 aa).

Residues 30 to 33, lysine 51, 87 to 91, glycine 415, and aspartate 496 each bind ATP; these read TLGP and DGTTT. A disordered region spans residues 525-547; sequence KPEPKSPAGGPGMGGMGGMDGMM. Residues 533-547 are compositionally biased toward gly residues; sequence GGPGMGGMGGMDGMM.

The protein belongs to the chaperonin (HSP60) family. In terms of assembly, forms a cylinder of 14 subunits composed of two heptameric rings stacked back-to-back. Interacts with the co-chaperonin GroES.

Its subcellular location is the cytoplasm. The enzyme catalyses ATP + H2O + a folded polypeptide = ADP + phosphate + an unfolded polypeptide.. Functionally, together with its co-chaperonin GroES, plays an essential role in assisting protein folding. The GroEL-GroES system forms a nano-cage that allows encapsulation of the non-native substrate proteins and provides a physical environment optimized to promote and accelerate protein folding. The protein is Chaperonin GroEL of Cereibacter sphaeroides (strain ATCC 17029 / ATH 2.4.9) (Rhodobacter sphaeroides).